Reading from the N-terminus, the 188-residue chain is GTPase KRas (188 aa).

GTP contacts are provided by residues 10–18, 29–35, 59–60, and 116–119; these read GAGGVGKSA, VDEYDPT, AG, and NKCD. The Effector region motif lies at 32 to 40; it reads YDPTIEDSY. Residues 167-188 are disordered; that stretch reads KEKMSKEGKKKKKKSKTKCILM. Cysteine methyl ester is present on Cys185. Cys185 carries S-farnesyl cysteine lipidation. A propeptide spans 186–188 (removed in mature form); that stretch reads ILM.

Belongs to the small GTPase superfamily. Ras family.

It localises to the cell membrane. Its subcellular location is the cytoplasm. It catalyses the reaction GTP + H2O = GDP + phosphate + H(+). Alternates between an inactive form bound to GDP and an active form bound to GTP. Activated by a guanine nucleotide-exchange factor (GEF) and inactivated by a GTPase-activating protein (GAP). Ras proteins bind GDP/GTP and possess intrinsic GTPase activity. Plays an important role in the regulation of cell proliferation. This is GTPase KRas (kras1) from Oryzias latipes (Japanese rice fish).